The chain runs to 148 residues: RING finger protein 24 (148 aa).

The chain crosses the membrane as a helical span at residues 24–44 (IYIVVFGTAIFVFILSLLFCC). An RING-type zinc finger spans residues 78 to 119 (CAVCLEDFKPRDELGICPCKHAFHRKCLIKWLEVRKVCPLCN).

As to quaternary structure, interacts with TRPC1, TRPC3, TRPC4, TRPC5, TRPC6 and TRPC7.

It is found in the golgi apparatus membrane. Its function is as follows. May play a role in TRPCs intracellular trafficking. In Homo sapiens (Human), this protein is RING finger protein 24 (RNF24).